The primary structure comprises 263 residues: Tryptophan synthase alpha chain (263 aa).

Residues glutamate 47 and aspartate 58 each act as proton acceptor in the active site.

The protein belongs to the TrpA family. Tetramer of two alpha and two beta chains.

The protein resides in the plastid. It localises to the chloroplast. The catalysed reaction is (1S,2R)-1-C-(indol-3-yl)glycerol 3-phosphate + L-serine = D-glyceraldehyde 3-phosphate + L-tryptophan + H2O. It participates in amino-acid biosynthesis; L-tryptophan biosynthesis; L-tryptophan from chorismate: step 5/5. In terms of biological role, the alpha subunit is responsible for the aldol cleavage of indoleglycerol phosphate to indole and glyceraldehyde 3-phosphate. The sequence is that of Tryptophan synthase alpha chain from Antithamnion sp. (Red alga).